Consider the following 967-residue polypeptide: Translation initiation factor IF-2 (967 aa).

The segment at 34–363 (ASSTVEPPVA…APAVGGVSVP (330 aa)) is disordered. Composition is skewed to low complexity over residues 51-96 (PAGG…GNAA) and 103-154 (ASEA…TPGP). Residues 184-196 (RSEGGAQRGGPRP) show a composition bias toward gly residues. Over residues 197–206 (GGQQRSGKPG) the composition is skewed to low complexity. Residues 300-333 (PRRGGGPGGGPGGGGGFRGRGGRGGTQGAFGRGG) are compositionally biased toward gly residues. Basic residues predominate over residues 334 to 345 (ARGKHRKSKRAK). The region spanning 460–632 (PRPPVVTVMG…IVLTADGALE (173 aa)) is the tr-type G domain. The interval 469 to 476 (GHVDHGKT) is G1. A GTP-binding site is contributed by 469 to 476 (GHVDHGKT). The tract at residues 494-498 (GITQH) is G2. The segment at 519–522 (DTPG) is G3. GTP contacts are provided by residues 519–523 (DTPGH) and 573–576 (NKVD). The tract at residues 573–576 (NKVD) is G4. The G5 stretch occupies residues 609-611 (SAR).

Belongs to the TRAFAC class translation factor GTPase superfamily. Classic translation factor GTPase family. IF-2 subfamily.

It localises to the cytoplasm. One of the essential components for the initiation of protein synthesis. Protects formylmethionyl-tRNA from spontaneous hydrolysis and promotes its binding to the 30S ribosomal subunits. Also involved in the hydrolysis of GTP during the formation of the 70S ribosomal complex. The protein is Translation initiation factor IF-2 of Kocuria rhizophila (strain ATCC 9341 / DSM 348 / NBRC 103217 / DC2201).